A 184-amino-acid chain; its full sequence is Gastrokine-2 (184 aa).

Positions 1–20 are cleaved as a signal peptide; it reads MKSLVAFLVVLSILRIQSQA. Positions 54–151 constitute a BRICHOS domain; sequence HSGSCSSTTI…LCKHIPLYEG (98 aa). Cysteines 81 and 143 form a disulfide.

Heterodimer with TFF1; disulfide linked. Interacts with TFF2.

Its subcellular location is the secreted. In Rattus norvegicus (Rat), this protein is Gastrokine-2 (Gkn2).